A 286-amino-acid polypeptide reads, in one-letter code: Energy-coupling factor transporter ATP-binding protein EcfA2 (286 aa).

One can recognise an ABC transporter domain in the interval 3 to 246 (IRFDNVSYTY…KEKLADWHIA (244 aa)). ATP is bound at residue 40–47 (GQTGSGKS).

It belongs to the ABC transporter superfamily. Energy-coupling factor EcfA family. In terms of assembly, forms a stable energy-coupling factor (ECF) transporter complex composed of 2 membrane-embedded substrate-binding proteins (S component), 2 ATP-binding proteins (A component) and 2 transmembrane proteins (T component).

The protein resides in the cell membrane. Its function is as follows. ATP-binding (A) component of a common energy-coupling factor (ECF) ABC-transporter complex. Unlike classic ABC transporters this ECF transporter provides the energy necessary to transport a number of different substrates. The polypeptide is Energy-coupling factor transporter ATP-binding protein EcfA2 (Staphylococcus aureus (strain bovine RF122 / ET3-1)).